Consider the following 176-residue polypeptide: Isopentenyl-diphosphate Delta-isomerase (176 aa).

Residues His-24 and His-30 each contribute to the Mn(2+) site. The Nudix hydrolase domain maps to Leu-28–Cys-160. Residue Cys-65 is part of the active site. Position 67 (His-67) interacts with Mn(2+). Position 85 (Glu-85) interacts with Mg(2+). Positions 110 and 112 each coordinate Mn(2+). Residue Glu-112 is part of the active site.

Belongs to the IPP isomerase type 1 family. Mg(2+) serves as cofactor. Requires Mn(2+) as cofactor.

Its subcellular location is the cytoplasm. It carries out the reaction isopentenyl diphosphate = dimethylallyl diphosphate. It functions in the pathway isoprenoid biosynthesis; dimethylallyl diphosphate biosynthesis; dimethylallyl diphosphate from isopentenyl diphosphate: step 1/1. In terms of biological role, catalyzes the 1,3-allylic rearrangement of the homoallylic substrate isopentenyl (IPP) to its highly electrophilic allylic isomer, dimethylallyl diphosphate (DMAPP). The protein is Isopentenyl-diphosphate Delta-isomerase of Burkholderia multivorans (strain ATCC 17616 / 249).